The sequence spans 327 residues: MKKWQFVGTTALGATLLLGACGGGNGGSGNSDLKGEAKGDGSSTVAPIVEKLNEKWAQDHSDAKISAGQAGTGAGFQKFIAGDIDFADASRPIKDEEKQKLQDKNIKYKEFKIAQDGVTVAVNKENDFVDELDKQQLKAIYSGKAKTWKDVNSKWPDKKINAVSPNSSHGTYDFFENEVMNKEDIKAEKNADTNAIVSSVTKNKEGIGYFGYNFYVQNKDKLKEVKIKDENGKATEPTKKTIQDNSYALSRPLFIYVNEKALKDNKVMSEFIKFVLEDKGKAAEEGGYVAAPEKTYKSQLDDLKAFIDKNQKSDDKKSDDKKSEDKK.

Positions 1 to 20 (MKKWQFVGTTALGATLLLGA) are cleaved as a signal peptide. A lipid anchor (N-palmitoyl cysteine) is attached at cysteine 21. Residue cysteine 21 is the site of S-diacylglycerol cysteine attachment. The interval 307-327 (IDKNQKSDDKKSDDKKSEDKK) is disordered.

The protein belongs to the PstS family. In terms of assembly, the complex is composed of two ATP-binding proteins (PstB), two transmembrane proteins (PstC and PstA) and a solute-binding protein (PstS).

Its subcellular location is the cell membrane. Part of the ABC transporter complex PstSACB involved in phosphate import. The polypeptide is Phosphate-binding protein PstS (pstS) (Staphylococcus aureus (strain MRSA252)).